A 101-amino-acid polypeptide reads, in one-letter code: Integration host factor subunit alpha (101 aa).

Belongs to the bacterial histone-like protein family. As to quaternary structure, heterodimer of an alpha and a beta chain.

Functionally, this protein is one of the two subunits of integration host factor, a specific DNA-binding protein that functions in genetic recombination as well as in transcriptional and translational control. The chain is Integration host factor subunit alpha from Alkalilimnicola ehrlichii (strain ATCC BAA-1101 / DSM 17681 / MLHE-1).